The chain runs to 316 residues: tRNA dimethylallyltransferase (316 aa).

17 to 24 (GPTASGKT) serves as a coordination point for ATP. Residue 19 to 24 (TASGKT) coordinates substrate. Interaction with substrate tRNA regions lie at residues 42 to 45 (DSAL), 166 to 170 (QRLSR), 247 to 252 (RCVGYR), and 280 to 287 (KRQITWLR).

This sequence belongs to the IPP transferase family. In terms of assembly, monomer. Requires Mg(2+) as cofactor.

The enzyme catalyses adenosine(37) in tRNA + dimethylallyl diphosphate = N(6)-dimethylallyladenosine(37) in tRNA + diphosphate. Its function is as follows. Catalyzes the transfer of a dimethylallyl group onto the adenine at position 37 in tRNAs that read codons beginning with uridine, leading to the formation of N6-(dimethylallyl)adenosine (i(6)A). This chain is tRNA dimethylallyltransferase, found in Shigella boydii serotype 18 (strain CDC 3083-94 / BS512).